We begin with the raw amino-acid sequence, 962 residues long: Exportin-T (962 aa).

M1 is modified (N-acetylmethionine). Positions 1–385 (MDEQALLGLN…MLAVMKKLTY (385 aa)) are necessary for interaction with Ran, nuclear localization and nuclear import. Residues 443 to 962 (FMEVEVAIRL…LKVFFQRAKP (520 aa)) are necessary for tRNA-binding, cytoplasmic localization and nuclear export. K634 bears the N6-acetyllysine mark.

It belongs to the exportin family. As to quaternary structure, found in a complex with XPOT, Ran and tRNA. Probably found in a complex with nucleoporins. Interacts with Ran and tRNA in a GTP-dependent manner.

The protein resides in the nucleus. Its subcellular location is the cytoplasm. Mediates the nuclear export of aminoacylated tRNAs. In the nucleus binds to tRNA and to the GTPase Ran in its active GTP-bound form. Docking of this trimeric complex to the nuclear pore complex (NPC) is mediated through binding to nucleoporins. Upon transit of a nuclear export complex into the cytoplasm, disassembling of the complex and hydrolysis of Ran-GTP to Ran-GDP (induced by RANBP1 and RANGAP1, respectively) cause release of the tRNA from the export receptor. XPOT then return to the nuclear compartment and mediate another round of transport. The directionality of nuclear export is thought to be conferred by an asymmetric distribution of the GTP- and GDP-bound forms of Ran between the cytoplasm and nucleus. The polypeptide is Exportin-T (XPOT) (Homo sapiens (Human)).